A 227-amino-acid polypeptide reads, in one-letter code: Octanoyltransferase (227 aa).

Positions 35-222 (EAYENRIIMC…ELGRLLNEKK (188 aa)) constitute a BPL/LPL catalytic domain. Residues 80 to 87 (RGGDITYH), 152 to 154 (AIG), and 165 to 167 (GLA) contribute to the substrate site. Cys-183 (acyl-thioester intermediate) is an active-site residue.

This sequence belongs to the LipB family.

The protein localises to the cytoplasm. The enzyme catalyses octanoyl-[ACP] + L-lysyl-[protein] = N(6)-octanoyl-L-lysyl-[protein] + holo-[ACP] + H(+). Its pathway is protein modification; protein lipoylation via endogenous pathway; protein N(6)-(lipoyl)lysine from octanoyl-[acyl-carrier-protein]: step 1/2. In terms of biological role, catalyzes the transfer of endogenously produced octanoic acid from octanoyl-acyl-carrier-protein onto the lipoyl domains of lipoate-dependent enzymes. Lipoyl-ACP can also act as a substrate although octanoyl-ACP is likely to be the physiological substrate. In Bacteroides thetaiotaomicron (strain ATCC 29148 / DSM 2079 / JCM 5827 / CCUG 10774 / NCTC 10582 / VPI-5482 / E50), this protein is Octanoyltransferase.